Reading from the N-terminus, the 254-residue chain is Phosphonates import ATP-binding protein PhnC 2 (254 aa).

Residues 4-248 (LEVNNLGKHY…KIESIYGFQQ (245 aa)) enclose the ABC transporter domain. 37–44 (GPSGAGKS) lines the ATP pocket.

This sequence belongs to the ABC transporter superfamily. Phosphonates importer (TC 3.A.1.9.1) family. The complex is composed of two ATP-binding proteins (PhnC), two transmembrane proteins (PhnE) and a solute-binding protein (PhnD).

The protein resides in the cell membrane. It catalyses the reaction phosphonate(out) + ATP + H2O = phosphonate(in) + ADP + phosphate + H(+). In terms of biological role, part of the ABC transporter complex PhnCDE involved in phosphonates import. Responsible for energy coupling to the transport system. The chain is Phosphonates import ATP-binding protein PhnC 2 from Oceanobacillus iheyensis (strain DSM 14371 / CIP 107618 / JCM 11309 / KCTC 3954 / HTE831).